A 195-amino-acid polypeptide reads, in one-letter code: Imidazoleglycerol-phosphate dehydratase (195 aa).

The protein belongs to the imidazoleglycerol-phosphate dehydratase family.

It is found in the cytoplasm. It catalyses the reaction D-erythro-1-(imidazol-4-yl)glycerol 3-phosphate = 3-(imidazol-4-yl)-2-oxopropyl phosphate + H2O. It participates in amino-acid biosynthesis; L-histidine biosynthesis; L-histidine from 5-phospho-alpha-D-ribose 1-diphosphate: step 6/9. The sequence is that of Imidazoleglycerol-phosphate dehydratase from Bordetella bronchiseptica (strain ATCC BAA-588 / NCTC 13252 / RB50) (Alcaligenes bronchisepticus).